The following is a 315-amino-acid chain: Calumenin-A (315 aa).

The N-terminal stretch at Met1 to Ser19 is a signal peptide. EF-hand domains lie at Glu68 to Lys103, Tyr104 to Asp139, Gln151 to Glu186, Met188 to Glu223, Trp229 to Asp264, and His265 to Ser300. The Ca(2+) site is built by Asp81, Asp83, Asp85, Glu92, Asp117, Asn119, Asp121, Met123, and Glu128. Asn131 is a glycosylation site (N-linked (GlcNAc...) asparagine). The Ca(2+) site is built by Asp164, Asn166, Asp168, Glu175, Asp201, Asn203, Asp205, Glu212, Asp242, Asn244, Asp246, Lys248, Glu253, Asp278, Asn280, Asp282, Lys284, and Glu289. Residues His312 to Phe315 carry the Prevents secretion from ER motif.

This sequence belongs to the CREC family. In terms of assembly, interacts with ggcx.

It is found in the endoplasmic reticulum membrane. Its subcellular location is the golgi apparatus. It localises to the secreted. The protein localises to the melanosome. The protein resides in the sarcoplasmic reticulum lumen. Its function is as follows. Involved in regulation of vitamin K-dependent carboxylation of multiple N-terminal glutamate residues. Seems to inhibit gamma-carboxylase ggcx. Binds 7 calcium ions with a low affinity. This is Calumenin-A (calua) from Danio rerio (Zebrafish).